The following is a 317-amino-acid chain: GTP cyclohydrolase MptA (317 aa).

This sequence belongs to the GTP cyclohydrolase IV family. In terms of assembly, homodimer. It depends on Fe(2+) as a cofactor.

The catalysed reaction is GTP + H2O = 7,8-dihydroneopterin 2',3'-cyclic phosphate + formate + diphosphate + H(+). Its pathway is cofactor biosynthesis; 5,6,7,8-tetrahydromethanopterin biosynthesis. Functionally, converts GTP to 7,8-dihydro-D-neopterin 2',3'-cyclic phosphate, the first intermediate in the biosynthesis of coenzyme methanopterin. The chain is GTP cyclohydrolase MptA from Methanococcoides burtonii (strain DSM 6242 / NBRC 107633 / OCM 468 / ACE-M).